The following is a 456-amino-acid chain: MARLLTNRQADELHKSIIAYLSANDLPNTAAALRAELNLTEEDFDATAVKKYETLLEKKWTSIVRLQKKIMDLEARNAALQSELDNLTPASLLKPRRDPTSWLPTHPPRYSLESHRDTINCIAFHPKFSSLASGSDDFTIKIWDWELGELEMTLKGHTRAVLDVDYGSPQGITMLASCSSDLSVKLWDPAEGYKNVRTLLGHDHSVSAVRFIPCRNLLASASRDKDVRIWDVTTGYCVRSIQGHTGWVRDVCPSFDGNFLFSSGDDMTARLWDISAIPNPENKVTMAGHEHFIECCALAPPTSYQYLAPVAGLKGPSYPKSAAEFMATGSRDKTIKVWDVRGTCLMTLIGHDNWVRGIVFHPAGKYLLSVSDDRTLRCWDLSQEGKCVKTIKDAHDRFVTCLSWAPGVAKDVPAIPSNTAKGESSEIKETLKSPDVQIRCVIATGSVDRKLQIFAA.

The LisH domain maps to 9–41; it reads QADELHKSIIAYLSANDLPNTAAALRAELNLTE. Residues 61-88 are a coiled coil; that stretch reads TSIVRLQKKIMDLEARNAALQSELDNLT. 8 WD repeats span residues 114-153, 156-197, 201-240, 243-282, 288-348, 350-389, 394-437, and 439-456; these read SHRD…LEMT, GHTR…KNVR, GHDH…CVRS, GHTG…NPEN, GHEH…LMTL, GHDN…KCVK, AHDR…PDVQ, and RCVI…IFAA.

This sequence belongs to the WD repeat LIS1/nudF family. Self-associates. Interacts with NDL1 and dynein.

It is found in the cytoplasm. The protein localises to the cytoskeleton. Its subcellular location is the spindle pole. Positively regulates the activity of the minus-end directed microtubule motor protein dynein. May enhance dynein-mediated microtubule sliding by targeting dynein to the microtubule plus end. Required for nuclear migration during vegetative growth as well as development. Required for retrograde early endosome (EE) transport from the hyphal tip. Required for localization of dynein to the mitotic spindle poles. Recruits additional proteins to the dynein complex at SPBs. In Ajellomyces capsulatus (strain H143) (Darling's disease fungus), this protein is Nuclear distribution protein PAC1.